The primary structure comprises 297 residues: Transmembrane protein 169 (297 aa).

Residues methionine 1–isoleucine 84 are disordered. Residues methionine 1–histidine 159 are Extracellular-facing. Over residues glycine 9–histidine 18 the composition is skewed to polar residues. A compositionally biased stretch (acidic residues) spans glutamate 60–isoleucine 84. A helical transmembrane segment spans residues valine 160–phenylalanine 180. Residues tyrosine 181 to leucine 210 are Cytoplasmic-facing. Residues isoleucine 211 to valine 231 traverse the membrane as a helical segment. The Extracellular portion of the chain corresponds to valine 232 to valine 297.

The protein resides in the membrane. The polypeptide is Transmembrane protein 169 (TMEM169) (Bos taurus (Bovine)).